The following is a 247-amino-acid chain: 1-(5-phosphoribosyl)-5-[(5-phosphoribosylamino)methylideneamino] imidazole-4-carboxamide isomerase (247 aa).

The active-site Proton acceptor is the D8. The Proton donor role is filled by D131.

It belongs to the HisA/HisF family.

Its subcellular location is the cytoplasm. The enzyme catalyses 1-(5-phospho-beta-D-ribosyl)-5-[(5-phospho-beta-D-ribosylamino)methylideneamino]imidazole-4-carboxamide = 5-[(5-phospho-1-deoxy-D-ribulos-1-ylimino)methylamino]-1-(5-phospho-beta-D-ribosyl)imidazole-4-carboxamide. It participates in amino-acid biosynthesis; L-histidine biosynthesis; L-histidine from 5-phospho-alpha-D-ribose 1-diphosphate: step 4/9. This chain is 1-(5-phosphoribosyl)-5-[(5-phosphoribosylamino)methylideneamino] imidazole-4-carboxamide isomerase, found in Cupriavidus metallidurans (strain ATCC 43123 / DSM 2839 / NBRC 102507 / CH34) (Ralstonia metallidurans).